Here is a 128-residue protein sequence, read N- to C-terminus: MAKLTKDELIEAFKEMTLIELSEFVKEFEEVFDVEAAAPVAAVAAGAPAAGGAAEEEKTEFDVVLTDAGAKKIGVIKAVREIVSGLGLKEAKELVEGAPKAILEGASKDDAEAAKAKLEEAGASVELK.

This sequence belongs to the bacterial ribosomal protein bL12 family. In terms of assembly, homodimer. Part of the ribosomal stalk of the 50S ribosomal subunit. Forms a multimeric L10(L12)X complex, where L10 forms an elongated spine to which 2 to 4 L12 dimers bind in a sequential fashion. Binds GTP-bound translation factors.

Forms part of the ribosomal stalk which helps the ribosome interact with GTP-bound translation factors. Is thus essential for accurate translation. This is Large ribosomal subunit protein bL12 from Corynebacterium aurimucosum (strain ATCC 700975 / DSM 44827 / CIP 107346 / CN-1) (Corynebacterium nigricans).